The chain runs to 61 residues: Small ribosomal subunit protein bS21 (61 aa).

A disordered region spans residues 40–61 (KPSVKRKKKSEAARKRKNKRRF). The segment covering 43-61 (VKRKKKSEAARKRKNKRRF) has biased composition (basic residues).

This sequence belongs to the bacterial ribosomal protein bS21 family.

In Ligilactobacillus salivarius (strain UCC118) (Lactobacillus salivarius), this protein is Small ribosomal subunit protein bS21.